The following is a 267-amino-acid chain: uncharacterized protein (267 aa).

Residues 58–90 (RHTDDKQEKNQNEGEDNQKGENKTTDQQDGPKK) form a disordered region. The next 2 helical transmembrane spans lie at 101–121 (IYVL…LSQM) and 226–246 (GMTT…AWLG).

Its subcellular location is the membrane. This is an uncharacterized protein from Caenorhabditis elegans.